The primary structure comprises 179 residues: Large ribosomal subunit protein uL5 (179 aa).

The protein belongs to the universal ribosomal protein uL5 family. As to quaternary structure, part of the 50S ribosomal subunit; part of the 5S rRNA/L5/L18/L25 subcomplex. Contacts the 5S rRNA and the P site tRNA. Forms a bridge to the 30S subunit in the 70S ribosome.

Its function is as follows. This is one of the proteins that bind and probably mediate the attachment of the 5S RNA into the large ribosomal subunit, where it forms part of the central protuberance. In the 70S ribosome it contacts protein S13 of the 30S subunit (bridge B1b), connecting the 2 subunits; this bridge is implicated in subunit movement. Contacts the P site tRNA; the 5S rRNA and some of its associated proteins might help stabilize positioning of ribosome-bound tRNAs. The sequence is that of Large ribosomal subunit protein uL5 from Pseudomonas putida (strain ATCC 700007 / DSM 6899 / JCM 31910 / BCRC 17059 / LMG 24140 / F1).